Reading from the N-terminus, the 61-residue chain is MAKKSIIAKAKRKQKFAVREYNRCPLCGRPRAFIRKFGICRICFRKLASSGEVTGVTKSSW.

Zn(2+)-binding residues include Cys-24, Cys-27, Cys-40, and Cys-43.

The protein belongs to the universal ribosomal protein uS14 family. Zinc-binding uS14 subfamily. In terms of assembly, part of the 30S ribosomal subunit. Contacts proteins S3 and S10. Zn(2+) is required as a cofactor.

Binds 16S rRNA, required for the assembly of 30S particles and may also be responsible for determining the conformation of the 16S rRNA at the A site. The sequence is that of Small ribosomal subunit protein uS14 from Desulfotalea psychrophila (strain LSv54 / DSM 12343).